The primary structure comprises 67 residues: Small integral membrane protein 20 (67 aa).

At Met-1–Arg-6 the chain is on the mitochondrial matrix side. A helical transmembrane segment spans residues Thr-7 to Phe-27. The Mitochondrial intermembrane segment spans residues Arg-28–Lys-67. Position 64 is a phenylalanine amide (Phe-64).

As to quaternary structure, component of the MITRAC (mitochondrial translation regulation assembly intermediate of cytochrome c oxidase complex) complex, the core components of this complex being COA3/MITRAC12 and COX14. Interacts with COA3/MITRAC12 and COX4I1. Directly interacts with newly synthesized MT-CO1/COX1. Expressed in the ovary, specifically in granulosa cells of follicles that have passed the primary stage and in oocytes (at protein level).

It localises to the mitochondrion inner membrane. Its subcellular location is the secreted. In terms of biological role, component of the MITRAC (mitochondrial translation regulation assembly intermediate of cytochrome c oxidase complex) complex, that regulates cytochrome c oxidase assembly. Promotes the progression of complex assembly after the association of MT-CO1/COX1 with COX4I1 and COX6C. Chaperone-like assembly factor required to stabilize newly synthesized MT-CO1/COX1 and to prevent its premature turnover. Its function is as follows. Peptide involved in a broad spectrum of regulatory functions. Is a ligand for GPR173. As part of the reproductive cycle, it regulates gonadotropin-releasing hormone (GnRH) signaling in the hypothalamus and pituitary gland which augments the release of luteinizing hormone. Plays a protective role in memory retention through activation of GNRHR. Regulates the secretion of AVP by hypothalamic neurons. Plays a role in the transduction of the itch sensation. Induces anxiolytic effects, reducing behavior associated with anxiety. Regulates food intake as well as satiation and satiety. In the ovary, it regulates follicular growth by stimulating granulosa cell proliferation by increasing the expression of GPR173, CREB1, CYP19A1, KITLG, FSHR, and LHCGR. It also increases the production of estradiol (E2). In the heart, it regulates contractility and relaxation. It also plays a cardioprotective role during ischemia, where it activates the SAFE and RISK pathways. Stimulates the proliferation and differentiation of preadipocytes. In pancreatic islet cells, it induces proliferation of islet cells as well as the production of INS. This Homo sapiens (Human) protein is Small integral membrane protein 20 (SMIM20).